A 182-amino-acid polypeptide reads, in one-letter code: Adenine phosphoribosyltransferase (182 aa).

This sequence belongs to the purine/pyrimidine phosphoribosyltransferase family. As to quaternary structure, homodimer.

It is found in the cytoplasm. The enzyme catalyses AMP + diphosphate = 5-phospho-alpha-D-ribose 1-diphosphate + adenine. It participates in purine metabolism; AMP biosynthesis via salvage pathway; AMP from adenine: step 1/1. Its function is as follows. Catalyzes a salvage reaction resulting in the formation of AMP, that is energically less costly than de novo synthesis. The chain is Adenine phosphoribosyltransferase from Bordetella pertussis (strain Tohama I / ATCC BAA-589 / NCTC 13251).